A 386-amino-acid polypeptide reads, in one-letter code: Hemagglutinin-esterase (386 aa).

Positions 1–11 are cleaved as a signal peptide; sequence MLIIFLFFYFC. The interval 1–121 is esterase domain 1; the sequence is MLIIFLFFYF…SNDVWLLNKV (121 aa). The Virion surface portion of the chain corresponds to 12 to 359; the sequence is YGFNEPLNVV…PICVYDFLPI (348 aa). Ser-34 serves as the catalytic Nucleophile. Cys-38 and Cys-59 are joined by a disulfide. N-linked (GlcNAc...) asparagine; by host glycans are attached at residues Asn-83, Asn-110, Asn-145, and Asn-168. A disulfide bridge links Cys-107 with Cys-154. The interval 122-236 is receptor binding; sequence RFYRALYSNM…GSYKVSTTAP (115 aa). Intrachain disulfides connect Cys-180-Cys-246, Cys-188-Cys-219, and Cys-277-Cys-282. The tract at residues 237-349 is esterase domain 2; that stretch reads FLSLPTKALC…RCPTSSIIKH (113 aa). The N-linked (GlcNAc...) asparagine; by host glycan is linked to Asn-286. Residues Asp-296 and His-299 each act as charge relay system in the active site. An intrachain disulfide couples Cys-317 to Cys-341. Asn-328 is a glycosylation site (N-linked (GlcNAc...) asparagine; by host). The chain crosses the membrane as a helical span at residues 360–380; it reads ILQGILLCLALLFVVFLLFLL. Topologically, residues 381–386 are intravirion; that stretch reads YNDKSH.

It belongs to the influenza type C/coronaviruses hemagglutinin-esterase family. As to quaternary structure, homodimer; disulfide-linked. Forms a complex with the M protein in the pre-Golgi. Associates then with S-M complex to form a ternary complex S-M-HE. Post-translationally, N-glycosylated in the host RER.

The protein localises to the virion membrane. The protein resides in the host cell membrane. The catalysed reaction is N-acetyl-9-O-acetylneuraminate + H2O = N-acetylneuraminate + acetate + H(+). It catalyses the reaction N-acetyl-4-O-acetylneuraminate + H2O = N-acetylneuraminate + acetate + H(+). In terms of biological role, structural protein that makes short spikes at the surface of the virus. Contains receptor binding and receptor-destroying activities. Mediates de-O-acetylation of N-acetyl-4-O-acetylneuraminic acid, which is probably the receptor determinant recognized by the virus on the surface of erythrocytes and susceptible cells. This receptor-destroying activity is important for virus release as it probably helps preventing self-aggregation and ensures the efficient spread of the progeny virus from cell to cell. May serve as a secondary viral attachment protein for initiating infection, the spike protein being the major one. May become a target for both the humoral and the cellular branches of the immune system. This Homo sapiens (Human) protein is Hemagglutinin-esterase.